Consider the following 162-residue polypeptide: Nucleotide-binding protein AnaeK_0101 (162 aa).

Belongs to the YajQ family.

Functionally, nucleotide-binding protein. The protein is Nucleotide-binding protein AnaeK_0101 of Anaeromyxobacter sp. (strain K).